The chain runs to 122 residues: Probable dihydroneopterin aldolase (122 aa).

Substrate contacts are provided by residues Glu21, Tyr54, and 73-74 (LE). Lys101 functions as the Proton donor/acceptor in the catalytic mechanism.

Belongs to the DHNA family.

The enzyme catalyses 7,8-dihydroneopterin = 6-hydroxymethyl-7,8-dihydropterin + glycolaldehyde. Its pathway is cofactor biosynthesis; tetrahydrofolate biosynthesis; 2-amino-4-hydroxy-6-hydroxymethyl-7,8-dihydropteridine diphosphate from 7,8-dihydroneopterin triphosphate: step 3/4. Its function is as follows. Catalyzes the conversion of 7,8-dihydroneopterin to 6-hydroxymethyl-7,8-dihydropterin. The sequence is that of Probable dihydroneopterin aldolase (folB) from Chlamydia muridarum (strain MoPn / Nigg).